Reading from the N-terminus, the 442-residue chain is Histidinol dehydrogenase (442 aa).

Residues tyrosine 142, glutamine 204, and asparagine 227 each coordinate NAD(+). 3 residues coordinate substrate: serine 250, glutamine 272, and histidine 275. Zn(2+) is bound by residues glutamine 272 and histidine 275. Catalysis depends on proton acceptor residues glutamate 340 and histidine 341. Residues histidine 341, aspartate 374, glutamate 428, and histidine 433 each coordinate substrate. A Zn(2+)-binding site is contributed by aspartate 374. Histidine 433 provides a ligand contact to Zn(2+).

It belongs to the histidinol dehydrogenase family. Zn(2+) serves as cofactor.

The enzyme catalyses L-histidinol + 2 NAD(+) + H2O = L-histidine + 2 NADH + 3 H(+). Its pathway is amino-acid biosynthesis; L-histidine biosynthesis; L-histidine from 5-phospho-alpha-D-ribose 1-diphosphate: step 9/9. Functionally, catalyzes the sequential NAD-dependent oxidations of L-histidinol to L-histidinaldehyde and then to L-histidine. This is Histidinol dehydrogenase from Prochlorococcus marinus (strain MIT 9313).